Here is a 255-residue protein sequence, read N- to C-terminus: 5-oxoprolinase subunit A (255 aa).

This sequence belongs to the LamB/PxpA family. Forms a complex composed of PxpA, PxpB and PxpC.

The catalysed reaction is 5-oxo-L-proline + ATP + 2 H2O = L-glutamate + ADP + phosphate + H(+). Catalyzes the cleavage of 5-oxoproline to form L-glutamate coupled to the hydrolysis of ATP to ADP and inorganic phosphate. The protein is 5-oxoprolinase subunit A of Corynebacterium efficiens (strain DSM 44549 / YS-314 / AJ 12310 / JCM 11189 / NBRC 100395).